Here is a 129-residue protein sequence, read N- to C-terminus: MAKEAVRVRRRERKNISSGVAHVNSTFNNTMITITDAQGNAIAWSSAGAKGFKGSRKSTPFAAQIAAEDCAKKAQEHGMKSLEVEVCGPGSGRESALRALQAAGFMITSIRDVTPIPHNGCRPRKKRRV.

The protein belongs to the universal ribosomal protein uS11 family. In terms of assembly, part of the 30S ribosomal subunit. Interacts with proteins S7 and S18. Binds to IF-3.

Functionally, located on the platform of the 30S subunit, it bridges several disparate RNA helices of the 16S rRNA. Forms part of the Shine-Dalgarno cleft in the 70S ribosome. The chain is Small ribosomal subunit protein uS11 from Rhizobium etli (strain CIAT 652).